The chain runs to 494 residues: MHQSSWKSRRHRRRGHRHSAWFRQHGSNERKDAGAQQSPQGSSDGHGEAPSTSSTAGSSSVPDLPGYYFDPEKKRYFRLLPGHNNCNPLTKESIRQKEMERKRLRLLEEEEQQGKKIARLGFNASSLLQKSKLGFLNATSYCRLAHELQVSCMQRKKVQIQSSDPSALASDQFNLIMADTNSDRLFTVNDVKVGGSKYGIISLHGLKTPTFRVHMHENLYFTNRKVNAMCWASLNHLDSHVLLCLMGIAETPGCATLLPTSLFVSNHAAGDRPGMLCSFRIPGAWSCAWSLNIQANNCFSTGLSRRVLVTSVVTGHRQSFGTSSDVLTQQFAVTAPLLFNGCRSGEIFAIDLRCQNQGKGWKATCLFHDSAVTSVQILQEEQCLMASDMAGTIKLWDLRTTKCIRQYEGHVNEYAHLPLHVHEEEGIMVAVGQDCYTRIWSLHDGQLLRTIPSPYPTSKADIPSVAFSSRLGGARGAPGLLMAVRQDLYCFSYS.

The tract at residues methionine 1 to proline 65 is disordered. Over residues lysine 7–alanine 20 the composition is skewed to basic residues. The segment covering serine 51–serine 60 has biased composition (low complexity). WD repeat units lie at residues phenylalanine 367–glutamine 406 and glycine 409–threonine 450.

In terms of assembly, interacts with DDB1 and CUL4A.

Its pathway is protein modification; protein ubiquitination. May function as a substrate receptor for CUL4-DDB1 E3 ubiquitin-protein ligase complex. The sequence is that of DDB1- and CUL4-associated factor 4 (DCAF4) from Bos taurus (Bovine).